Reading from the N-terminus, the 887-residue chain is Probable alpha/beta-glucosidase agdC (887 aa).

The first 17 residues, Met1 to Ala17, serve as a signal peptide directing secretion. N-linked (GlcNAc...) asparagine glycans are attached at residues Asn171, Asn293, and Asn373. Residue Asp422 is the Nucleophile of the active site. Residue Glu425 is part of the active site. A disordered region spans residues Pro457–Val483. Catalysis depends on Asp571, which acts as the Proton donor. Asn747 and Asn879 each carry an N-linked (GlcNAc...) asparagine glycan.

This sequence belongs to the glycosyl hydrolase 31 family.

The protein localises to the secreted. The catalysed reaction is Hydrolysis of terminal, non-reducing (1-&gt;4)-linked alpha-D-glucose residues with release of alpha-D-glucose.. The enzyme catalyses Hydrolysis of terminal, non-reducing beta-D-glucosyl residues with release of beta-D-glucose.. Functionally, glucosidase involved in the degradation of cellulosic biomass. Has both alpha- and beta-glucosidase activity. This chain is Probable alpha/beta-glucosidase agdC (agdC), found in Aspergillus clavatus (strain ATCC 1007 / CBS 513.65 / DSM 816 / NCTC 3887 / NRRL 1 / QM 1276 / 107).